The sequence spans 144 residues: MADRLTQLQDAVNSLADQFCNAIGVLQQCGPPASFSNIQTAINKDQPANPTEEYAQLFAALIARTAKDIDVLIDSLPSEESTAALQAASLYKLEEENHEAATSLEDVVYRGDMLLEKIQSALADIAQSQLKTRSGTHSQSLPDS.

It belongs to the Mediator complex subunit 21 family. As to quaternary structure, component of the Mediator complex, which is composed of MED1, MED4, MED6, MED7, MED8, MED9, MED10, MED11, MED12, MED13, MED13L, MED14, MED15, MED16, MED17, MED18, MED19, MED20, MED21, MED22, MED23, MED24, MED25, MED26, MED27, MED29, MED30, MED31, CCNC, CDK8 and CDC2L6/CDK11. The MED12, MED13, CCNC and CDK8 subunits form a distinct module termed the CDK8 module. Mediator containing the CDK8 module is less active than Mediator lacking this module in supporting transcriptional activation. Individual preparations of the Mediator complex lacking one or more distinct subunits have been variously termed ARC, CRSP, DRIP, PC2, SMCC and TRAP. Interacts with PPARG. Interacts with THRA in a ligand-dependent fashion.

The protein localises to the nucleus. Its function is as follows. Component of the Mediator complex, a coactivator involved in the regulated transcription of nearly all RNA polymerase II-dependent genes. Mediator functions as a bridge to convey information from gene-specific regulatory proteins to the basal RNA polymerase II transcription machinery. Mediator is recruited to promoters by direct interactions with regulatory proteins and serves as a scaffold for the assembly of a functional preinitiation complex with RNA polymerase II and the general transcription factors. The chain is Mediator of RNA polymerase II transcription subunit 21 (MED21) from Bos taurus (Bovine).